The primary structure comprises 359 residues: MAVNFKFSLLTITIVVNILVYCNASAIKFDVDLEKVPSNAVACPAAEDIAPCTCKVGEGDVMDMDCSKVTSDAELASIFSKTFPSNTFRELFIEFNREITTLTADSLGAATFTKIAITSCTQLKTIEENAFMASAATLEKLVLLKNDLSSFPFEEMSQYTKLNWLELSVNSITGWPALSSDTLANLILFRNPIGNIPVDAFQTLPNIEQFNCFDCSITEVEAGTFTRSPKLQKLVLGYNGLTSLPVGAIKLHGHGPTTSNLGITNNQIISFPEGAVEGIQGILGIDFNRVTSLSEEVWRPILENLFQFSLLNNPLACVCDVMWLIDSPELLAKIKGNPRCAGGKRLKNLDPAVFHAMCQ.

The first 39 residues, 1 to 39 (MAVNFKFSLLTITIVVNILVYCNASAIKFDVDLEKVPSN), serve as a signal peptide directing secretion. LRR repeat units lie at residues 135–158 (AATL…EMSQ), 160–180 (TKLN…ALSS), 181–203 (DTLA…AFQT), 228–251 (SPKL…AIKL), 255–278 (GPTT…AVEG), 280–300 (QGIL…VWRP), 302–325 (LENL…MWLI), and 331–356 (LAKI…VFHA).

As to quaternary structure, heterotetramer of a catalytic 19 kDa and a non-catalytic 35 kDa subunit.

The protein resides in the secreted. Its function is as follows. Non-catalytic subunit of oplophorus-luciferin 2-monooxygenase. May stabilize the active conformation of the catalytic subunit. In Oplophorus gracilirostris (Luminous shrimp), this protein is Oplophorus-luciferin 2-monooxygenase non-catalytic subunit.